Consider the following 106-residue polypeptide: Acidic phospholipase A2 PhTX-III (106 aa).

Ca(2+) contacts are provided by tyrosine 23, glycine 25, and glycine 27. 5 disulfides stabilise this stretch: cysteine 24–cysteine 40, cysteine 39–cysteine 75, cysteine 45–cysteine 106, cysteine 46–cysteine 68, and cysteine 55–cysteine 66. Histidine 43 is a catalytic residue. Aspartate 44 serves as a coordination point for Ca(2+). Aspartate 69 is a catalytic residue.

Ca(2+) serves as cofactor. Expressed by the venom gland.

Its subcellular location is the secreted. The enzyme catalyses a 1,2-diacyl-sn-glycero-3-phosphocholine + H2O = a 1-acyl-sn-glycero-3-phosphocholine + a fatty acid + H(+). Its activity is regulated as follows. Partially inhibited by magnesium ions and completely inhibited by zinc ions These divalent cations may act as competitive antagonists of the cofactor. Its function is as follows. Snake venom phospholipase A2 (PLA2) that induces inflammatory response, with local edema and release of cytokines IL-1 alpha, IL-6 and TNF-alpha. Does not exhibit myotoxic, anticoagulant and antibacterial effects. Release of pro-inflammatory cytokines may be due to mast cell degranulation, and edema may be induced by arachidonic acid that results from the PLA2 catalytic activity. PLA2 catalyzes the calcium-dependent hydrolysis of the 2-acyl groups in 3-sn-phosphoglycerides. This Bothrocophias hyoprora (Amazonian hognose viper) protein is Acidic phospholipase A2 PhTX-III.